A 361-amino-acid chain; its full sequence is Phosphoserine aminotransferase (361 aa).

Position 42 (arginine 42) interacts with L-glutamate. Pyridoxal 5'-phosphate is bound by residues 76 to 77 (AT), tryptophan 102, threonine 152, aspartate 172, and glutamine 195. An N6-(pyridoxal phosphate)lysine modification is found at lysine 196. Position 237–238 (237–238 (NT)) interacts with pyridoxal 5'-phosphate.

This sequence belongs to the class-V pyridoxal-phosphate-dependent aminotransferase family. SerC subfamily. Homodimer. The cofactor is pyridoxal 5'-phosphate.

Its subcellular location is the cytoplasm. The catalysed reaction is O-phospho-L-serine + 2-oxoglutarate = 3-phosphooxypyruvate + L-glutamate. It carries out the reaction 4-(phosphooxy)-L-threonine + 2-oxoglutarate = (R)-3-hydroxy-2-oxo-4-phosphooxybutanoate + L-glutamate. The protein operates within amino-acid biosynthesis; L-serine biosynthesis; L-serine from 3-phospho-D-glycerate: step 2/3. It participates in cofactor biosynthesis; pyridoxine 5'-phosphate biosynthesis; pyridoxine 5'-phosphate from D-erythrose 4-phosphate: step 3/5. In terms of biological role, catalyzes the reversible conversion of 3-phosphohydroxypyruvate to phosphoserine and of 3-hydroxy-2-oxo-4-phosphonooxybutanoate to phosphohydroxythreonine. The protein is Phosphoserine aminotransferase of Xanthomonas oryzae pv. oryzae (strain MAFF 311018).